Consider the following 562-residue polypeptide: Glutamate--tRNA ligase (562 aa).

A 'HIGH' region motif is present at residues 90 to 100 (PNPSGLLHIGH).

The protein belongs to the class-I aminoacyl-tRNA synthetase family. Glutamate--tRNA ligase type 2 subfamily.

The protein resides in the cytoplasm. The enzyme catalyses tRNA(Glu) + L-glutamate + ATP = L-glutamyl-tRNA(Glu) + AMP + diphosphate. Its function is as follows. Catalyzes the attachment of glutamate to tRNA(Glu) in a two-step reaction: glutamate is first activated by ATP to form Glu-AMP and then transferred to the acceptor end of tRNA(Glu). The sequence is that of Glutamate--tRNA ligase from Nanoarchaeum equitans (strain Kin4-M).